Here is a 281-residue protein sequence, read N- to C-terminus: Small ribosomal subunit protein uS3 (281 aa).

One can recognise a KH type-2 domain in the interval 38–106 (IRRLLSTGLE…QVQLNILEVK (69 aa)). Positions 218–281 (APAGAERARR…VTHEPQIAES (64 aa)) are disordered. Over residues 238–256 (SGAAGTTVTGTDAGRAVGG) the composition is skewed to low complexity.

The protein belongs to the universal ribosomal protein uS3 family. Part of the 30S ribosomal subunit. Forms a tight complex with proteins S10 and S14.

Functionally, binds the lower part of the 30S subunit head. Binds mRNA in the 70S ribosome, positioning it for translation. The protein is Small ribosomal subunit protein uS3 of Mycobacterium leprae (strain Br4923).